We begin with the raw amino-acid sequence, 521 residues long: tRNA (adenine(58)-N(1))-methyltransferase non-catalytic subunit trm6 (521 aa).

Disordered regions lie at residues 1–24 (METE…NNNN), 305–336 (IYDK…AKTI), and 452–521 (QKST…KIDE). The segment covering 12 to 24 (KSTTSNTNDNNNN) has biased composition (low complexity). A compositionally biased stretch (basic and acidic residues) spans 308–334 (KQVKEKEKEKEKDENVKDEKESGEEAK). Composition is skewed to low complexity over residues 452–476 (QKST…TKTT) and 487–502 (DATT…AATT). Residues 510–521 (SESALKKRKIDE) are compositionally biased toward basic and acidic residues.

This sequence belongs to the TRM6/GCD10 family. In terms of assembly, heterotetramer; composed of two copies of trmt6 and two copies of trmt61a.

The protein localises to the nucleus. Its function is as follows. Substrate-binding subunit of tRNA (adenine-N(1)-)-methyltransferase, which catalyzes the formation of N(1)-methyladenine at position 58 (m1A58) in initiator methionyl-tRNA. In Dictyostelium discoideum (Social amoeba), this protein is tRNA (adenine(58)-N(1))-methyltransferase non-catalytic subunit trm6 (trmt6).